The chain runs to 263 residues: Small ribosomal subunit protein eS4 (263 aa).

One can recognise an S4 RNA-binding domain in the interval 42-104 (LPLIIFLRNR…TGENFRLIYD (63 aa)).

The protein belongs to the eukaryotic ribosomal protein eS4 family.

This chain is Small ribosomal subunit protein eS4 (RPS4), found in Bos taurus (Bovine).